A 315-amino-acid polypeptide reads, in one-letter code: Adenine deaminase (315 aa).

3 residues coordinate Zn(2+): H14, H16, and H194. The active-site Proton donor is the E197. Position 275 (D275) interacts with Zn(2+). Position 276 (D276) interacts with substrate.

It belongs to the metallo-dependent hydrolases superfamily. Adenosine and AMP deaminases family. Adenine deaminase type 2 subfamily. It depends on Zn(2+) as a cofactor.

It catalyses the reaction adenine + H2O + H(+) = hypoxanthine + NH4(+). Catalyzes the hydrolytic deamination of adenine to hypoxanthine. Plays an important role in the purine salvage pathway and in nitrogen catabolism. The polypeptide is Adenine deaminase (Pseudomonas putida (strain ATCC 47054 / DSM 6125 / CFBP 8728 / NCIMB 11950 / KT2440)).